Consider the following 438-residue polypeptide: Plasmalemma vesicle-associated protein (438 aa).

At 1–26 (MGLSMDRSPYSRTGDRDRGCWYYLRY) the chain is on the cytoplasmic side. Residues 27-47 (FFLFVSLIQFLIILGLVLFMI) traverse the membrane as a helical; Signal-anchor for type II membrane protein segment. Residues 48–438 (YGNVHATTES…LVNPAVPPSG (391 aa)) lie on the Extracellular side of the membrane. N-linked (GlcNAc...) asparagine glycans are attached at residues N82, N88, N112, and N150. Residues 289-383 (AGIERVTREN…TEVDVRISAL (95 aa)) are a coiled coil. The interval 393-438 (PAIQPRLPGPPPNPPPIDPASLEEFKKRILESQRPPLVNPAVPPSG) is disordered. 2 stretches are compositionally biased toward pro residues: residues 399 to 410 (LPGPPPNPPPID) and 429 to 438 (LVNPAVPPSG).

As to quaternary structure, homodimer. In terms of tissue distribution, expressed in lung (alveolar endothelial and bronchial epithelial cells), kidney (endothelium of peritubular capillaries), spleen, liver, adrenal (endothelial cells of the zona reticularis of the cortex and chromaffin cells in the medulla), pancreas (islets of Langerhans), testis (germ cells, interstitial cells in neonatal testis and spermatids), ovary (stromal endothelial, thecal layer of developing follicles, luteal cells within the corpus luteum), intestine (endothelium of capillaries of the intestinal villi) and pituitary (pituicyte cells in the neural lobe) (at protein level). Expressed in lung, kidney, spleen, liver, adrenal, testis, heart, muscle, pituitary, thyroid and ovary.

The protein localises to the cell membrane. It is found in the membrane. Its subcellular location is the caveola. It localises to the cytoplasm. The protein resides in the perinuclear region. Its function is as follows. Endothelial cell-specific membrane protein involved in the formation of the diaphragms that bridge endothelial fenestrae. It is also required for the formation of stomata of caveolae and transendothelial channels. Functions in microvascular permeability, endothelial fenestrae contributing to the passage of water and solutes and regulating transcellular versus paracellular flow in different organs. Plays a specific role in embryonic development. This chain is Plasmalemma vesicle-associated protein (Plvap), found in Rattus norvegicus (Rat).